The primary structure comprises 268 residues: Eukaryotic translation initiation factor 3 subunit J (268 aa).

Disordered stretches follow at residues 1 to 117 (MTPS…DLKH) and 219 to 242 (NEKM…KTKV). Residues 26-44 (DEEDEEVLDSWDAAEDSEV) show a composition bias toward acidic residues. Residues 40–95 (EDSEVEREKAAKAAEAKAKAEAEAAAKKKSKAQRIEEHKAERRKNAEADSEEDEDE) adopt a coiled-coil conformation. Composition is skewed to basic and acidic residues over residues 45 to 65 (EREK…EAAA) and 72 to 86 (QRIE…KNAE). Residues 87 to 99 (ADSEEDEDEDEDE) show a composition bias toward acidic residues. 2 stretches are compositionally biased toward basic and acidic residues: residues 100-117 (AEKR…DLKH) and 220-232 (EKMR…DKGS).

Belongs to the eIF-3 subunit J family. Component of the eukaryotic translation initiation factor 3 (eIF-3) complex.

Its subcellular location is the cytoplasm. Functionally, component of the eukaryotic translation initiation factor 3 (eIF-3) complex, which is involved in protein synthesis of a specialized repertoire of mRNAs and, together with other initiation factors, stimulates binding of mRNA and methionyl-tRNAi to the 40S ribosome. The eIF-3 complex specifically targets and initiates translation of a subset of mRNAs involved in cell proliferation. This Aspergillus clavatus (strain ATCC 1007 / CBS 513.65 / DSM 816 / NCTC 3887 / NRRL 1 / QM 1276 / 107) protein is Eukaryotic translation initiation factor 3 subunit J (hcr1).